The chain runs to 578 residues: Matrix metalloproteinase-17 (578 aa).

Disordered regions lie at residues 1–22 (MGRR…PGPG) and 107–133 (PRCS…TKWS). A signal peptide spans 1-39 (MGRRPRGPGSPRGPGPPRPGPGLPPLLLVLALAAHGGCA). Over residues 11 to 22 (PRGPGPPRPGPG) the composition is skewed to pro residues. The propeptide occupies 40–124 (APAPRAEDLS…PPGAQSRRKR (85 aa)). A Cysteine switch motif is present at residues 107-114 (PRCSLPDL). Cys109 contacts Zn(2+). N-linked (GlcNAc...) asparagine glycosylation is present at Asn136. His247 provides a ligand contact to Zn(2+). Residue Glu248 is part of the active site. His251 and His257 together coordinate Zn(2+). The segment at 301–334 (PTAQLDTPEPEEPPLLPEPPNNRSSTPPQKDVPH) is disordered. N-linked (GlcNAc...) asparagine glycosylation occurs at Asn322. Hemopexin repeat units lie at residues 333–382 (PHRC…WRGL), 386–432 (LDSV…SLPP), 436–479 (DAVF…WRGV), and 480–527 (PSML…WLVC). Residues Cys336 and Cys527 are joined by a disulfide bond. A lipid anchor (GPI-anchor amidated serine) is attached at Ser558. Positions 559–578 (DAHRLALPSLLLLTPLLWGL) are cleaved as a propeptide — removed in mature form.

The protein belongs to the peptidase M10A family. It depends on Zn(2+) as a cofactor. Ca(2+) is required as a cofactor. In terms of processing, the precursor is cleaved by a furin endopeptidase. Expressed by monocytes and macrophages.

Its subcellular location is the cell membrane. It is found in the secreted. The protein localises to the extracellular space. It localises to the extracellular matrix. Its function is as follows. Endopeptidase that degrades various components of the extracellular matrix, such as fibrin. May be involved in the activation of membrane-bound precursors of growth factors or inflammatory mediators, such as tumor necrosis factor-alpha. May also be involved in tumoral process. Not obvious if able to proteolytically activate progelatinase A. Does not hydrolyze collagen types I, II, III, IV and V, gelatin, fibronectin, laminin, decorin nor alpha1-antitrypsin. This Mus musculus (Mouse) protein is Matrix metalloproteinase-17 (Mmp17).